Reading from the N-terminus, the 158-residue chain is Lipoprotein signal peptidase (158 aa).

The next 4 helical transmembrane spans lie at 7 to 27 (LFWI…YWVV), 38 to 58 (ILPG…FSLF), 67 to 87 (WLSL…PVLD), and 95 to 115 (GLIL…GYVV). Catalysis depends on residues Asp116 and Asp132. The chain crosses the membrane as a helical span at residues 125-145 (FAVFNMADSFISIGIVCLLLA).

The protein belongs to the peptidase A8 family.

The protein localises to the cell inner membrane. It catalyses the reaction Release of signal peptides from bacterial membrane prolipoproteins. Hydrolyzes -Xaa-Yaa-Zaa-|-(S,diacylglyceryl)Cys-, in which Xaa is hydrophobic (preferably Leu), and Yaa (Ala or Ser) and Zaa (Gly or Ala) have small, neutral side chains.. The protein operates within protein modification; lipoprotein biosynthesis (signal peptide cleavage). This protein specifically catalyzes the removal of signal peptides from prolipoproteins. This chain is Lipoprotein signal peptidase, found in Nostoc sp. (strain PCC 7120 / SAG 25.82 / UTEX 2576).